The sequence spans 519 residues: Cytochrome P450 72C1 (519 aa).

A helical membrane pass occupies residues 10–30 (VFLIGFLILILNWVWRAVNWV). Cysteine 467 provides a ligand contact to heme.

Belongs to the cytochrome P450 family. Heme serves as cofactor. Expressed in hypocotyls, roots, cotyledons, stamens and silique junctions.

It localises to the membrane. Its function is as follows. Atypical cytochrome P450 involved in brassinosteroids (BRs) inactivation and regulation of BRs homeostasis. Does not possess carbon 26 hydroxylase activity and may inactivate BRs by hydroxylation of carbons other than C-26. Acts in association with CYP734A1 to inactivate BRs and modulate photomorphogenesis. In Arabidopsis thaliana (Mouse-ear cress), this protein is Cytochrome P450 72C1 (CYP72C1).